The sequence spans 410 residues: BTB and MATH domain-containing protein 42 (410 aa).

Residues 1-19 (MSSRSSWSSTEQINRTISS) are compositionally biased toward polar residues. Residues 1 to 29 (MSSRSSWSSTEQINRTISSRADDLPPQPR) are disordered. The region spanning 45 to 173 (STKLEWKIEQ…DGTLFLICEV (129 aa)) is the MATH domain. The 69-residue stretch at 219-287 (TDCVIHVGNK…MYTGATESLE (69 aa)) folds into the BTB domain. The segment at 389 to 410 (TSNIPISVSPPPARKRLRRSAK) is disordered. Residues 401-410 (ARKRLRRSAK) are compositionally biased toward basic residues.

In terms of assembly, interacts with cul-3.

It functions in the pathway protein modification; protein ubiquitination. Probable substrate-specific adapter of an E3 ubiquitin-protein ligase complex which mediates the ubiquitination and subsequent proteasomal degradation of target proteins. The polypeptide is BTB and MATH domain-containing protein 42 (bath-42) (Caenorhabditis elegans).